A 90-amino-acid chain; its full sequence is Small ribosomal subunit protein uS15c (90 aa).

This sequence belongs to the universal ribosomal protein uS15 family. In terms of assembly, part of the 30S ribosomal subunit.

The protein resides in the plastid. The protein localises to the chloroplast. The protein is Small ribosomal subunit protein uS15c (rps15) of Populus alba (White poplar).